The primary structure comprises 317 residues: Acetylglutamate kinase (317 aa).

Substrate is bound by residues 75–76 (GG), R97, and N196.

The protein belongs to the acetylglutamate kinase family. ArgB subfamily.

The protein localises to the cytoplasm. It catalyses the reaction N-acetyl-L-glutamate + ATP = N-acetyl-L-glutamyl 5-phosphate + ADP. It functions in the pathway amino-acid biosynthesis; L-arginine biosynthesis; N(2)-acetyl-L-ornithine from L-glutamate: step 2/4. In terms of biological role, catalyzes the ATP-dependent phosphorylation of N-acetyl-L-glutamate. This is Acetylglutamate kinase from Corynebacterium jeikeium (strain K411).